Here is a 388-residue protein sequence, read N- to C-terminus: tRNA 2-selenouridine synthase (388 aa).

The Rhodanese domain maps to 15–138; that stretch reads FTADTPLIDV…ARQFLINTID (124 aa). Cys-98 acts as the S-selanylcysteine intermediate in catalysis.

The protein belongs to the SelU family. Monomer.

The enzyme catalyses 5-methylaminomethyl-2-thiouridine(34) in tRNA + selenophosphate + (2E)-geranyl diphosphate + H2O + H(+) = 5-methylaminomethyl-2-selenouridine(34) in tRNA + (2E)-thiogeraniol + phosphate + diphosphate. It catalyses the reaction 5-methylaminomethyl-2-thiouridine(34) in tRNA + (2E)-geranyl diphosphate = 5-methylaminomethyl-S-(2E)-geranyl-thiouridine(34) in tRNA + diphosphate. It carries out the reaction 5-methylaminomethyl-S-(2E)-geranyl-thiouridine(34) in tRNA + selenophosphate + H(+) = 5-methylaminomethyl-2-(Se-phospho)selenouridine(34) in tRNA + (2E)-thiogeraniol. The catalysed reaction is 5-methylaminomethyl-2-(Se-phospho)selenouridine(34) in tRNA + H2O = 5-methylaminomethyl-2-selenouridine(34) in tRNA + phosphate. Its function is as follows. Involved in the post-transcriptional modification of the uridine at the wobble position (U34) of tRNA(Lys), tRNA(Glu) and tRNA(Gln). Catalyzes the conversion of 2-thiouridine (S2U-RNA) to 2-selenouridine (Se2U-RNA). Acts in a two-step process involving geranylation of 2-thiouridine (S2U) to S-geranyl-2-thiouridine (geS2U) and subsequent selenation of the latter derivative to 2-selenouridine (Se2U) in the tRNA chain. This is tRNA 2-selenouridine synthase from Nitrosomonas eutropha (strain DSM 101675 / C91 / Nm57).